A 453-amino-acid polypeptide reads, in one-letter code: Probable glycine dehydrogenase (decarboxylating) subunit 1 (453 aa).

This sequence belongs to the GcvP family. N-terminal subunit subfamily. As to quaternary structure, the glycine cleavage system is composed of four proteins: P, T, L and H. In this organism, the P 'protein' is a heterodimer of two subunits.

It carries out the reaction N(6)-[(R)-lipoyl]-L-lysyl-[glycine-cleavage complex H protein] + glycine + H(+) = N(6)-[(R)-S(8)-aminomethyldihydrolipoyl]-L-lysyl-[glycine-cleavage complex H protein] + CO2. In terms of biological role, the glycine cleavage system catalyzes the degradation of glycine. The P protein binds the alpha-amino group of glycine through its pyridoxal phosphate cofactor; CO(2) is released and the remaining methylamine moiety is then transferred to the lipoamide cofactor of the H protein. The chain is Probable glycine dehydrogenase (decarboxylating) subunit 1 from Methylococcus capsulatus (strain ATCC 33009 / NCIMB 11132 / Bath).